Reading from the N-terminus, the 313-residue chain is tRNA pseudouridine synthase B (313 aa).

The active-site Nucleophile is the aspartate 42.

Belongs to the pseudouridine synthase TruB family. Type 1 subfamily.

It carries out the reaction uridine(55) in tRNA = pseudouridine(55) in tRNA. Its function is as follows. Responsible for synthesis of pseudouridine from uracil-55 in the psi GC loop of transfer RNAs. The sequence is that of tRNA pseudouridine synthase B from Prochlorococcus marinus (strain SARG / CCMP1375 / SS120).